The chain runs to 413 residues: MKIYLVGGAVRDALLGLTIKDKDYLVVGSTPAEMLSLGYRQVGKDFPVFLHPKNQQEYALARIERKTGTGYDGFSCDANEHVSLEEDLLRRDLTINAIAQDEQGQLHDPYGGQQDIIHKQLRHVSQAFVEDPLRVLRVARFAARFHSLGFTVATETMALMSQISLSGELEHLTAERVWQECERALATDEPQVFFEVLAQCGALEVLFPEIHALFGVPQPEKWHPEIDTGKHTLLSLKQASLLTDDMAIRFATLVHDLGKALSPKESLPKHHGHGQKGLPLIKQFCQRLRVPNDYRDLALLVSDQHQNIHNAFELKASTLVSLFDKGDFWRKPERLNGLLSACIADIRGRTGLEKSAYPQAAYIEHCFQLAKQVEVQKIIADGFIGADIKNQLNRLRILAIDEYKQSLIKKQPN.

ATP contacts are provided by G8 and R11. Positions 8 and 11 each coordinate CTP. Mg(2+) is bound by residues D21 and D23. Residues R91, R137, and R140 each contribute to the ATP site. R91, R137, and R140 together coordinate CTP. In terms of domain architecture, HD spans 228-329 (TGKHTLLSLK…VSLFDKGDFW (102 aa)).

Belongs to the tRNA nucleotidyltransferase/poly(A) polymerase family. Bacterial CCA-adding enzyme type 1 subfamily. In terms of assembly, monomer. Can also form homodimers and oligomers. Mg(2+) serves as cofactor. The cofactor is Ni(2+).

It carries out the reaction a tRNA precursor + 2 CTP + ATP = a tRNA with a 3' CCA end + 3 diphosphate. It catalyses the reaction a tRNA with a 3' CCA end + 2 CTP + ATP = a tRNA with a 3' CCACCA end + 3 diphosphate. In terms of biological role, catalyzes the addition and repair of the essential 3'-terminal CCA sequence in tRNAs without using a nucleic acid template. Adds these three nucleotides in the order of C, C, and A to the tRNA nucleotide-73, using CTP and ATP as substrates and producing inorganic pyrophosphate. tRNA 3'-terminal CCA addition is required both for tRNA processing and repair. Also involved in tRNA surveillance by mediating tandem CCA addition to generate a CCACCA at the 3' terminus of unstable tRNAs. While stable tRNAs receive only 3'-terminal CCA, unstable tRNAs are marked with CCACCA and rapidly degraded. The polypeptide is Multifunctional CCA protein (Shewanella denitrificans (strain OS217 / ATCC BAA-1090 / DSM 15013)).